The primary structure comprises 376 residues: MFVTAPEIQWIRDDASLAQQCREWRTQPYLALDTEFMRVDTFYPAAGLVQVGDGRREWLIDPLLVRDWGPFAELLEDPRVVKVLHACSEDLEVFLRLTGSLPVPLFDTQLAAAYLGMAHSMGYSKLVKEVLDIDLPKDETRSDWLQRPLTEMQMRYAADDVQHLAQVYLALDARLSEEKRAWLLEDGAELVANLCRESDPREAYREVKLGWRLRPQQLAVLRELCAWREEQARLRNRPRNHVLRERTLWPLARLLPKNKTDLAAIEDMHPRTVRQDGDFLIELIAEAARLPQSEWPEALPEPLPPEVTPLLKSLRAIGQREAETLGMAPELMLRKKILEALLKSGYPHGPYELPDSLRGWRRERMGQALLNALESA.

The 3'-5' exonuclease domain occupies 8 to 176 (IQWIRDDASL…VYLALDARLS (169 aa)). Positions 214–294 (RPQQLAVLRE…AEAARLPQSE (81 aa)) constitute an HRDC domain.

It belongs to the RNase D family. A divalent metal cation is required as a cofactor.

It is found in the cytoplasm. The enzyme catalyses Exonucleolytic cleavage that removes extra residues from the 3'-terminus of tRNA to produce 5'-mononucleotides.. Its function is as follows. Exonuclease involved in the 3' processing of various precursor tRNAs. Initiates hydrolysis at the 3'-terminus of an RNA molecule and releases 5'-mononucleotides. The protein is Ribonuclease D of Pseudomonas paraeruginosa (strain DSM 24068 / PA7) (Pseudomonas aeruginosa (strain PA7)).